Consider the following 276-residue polypeptide: MIPNPRVEIGQAVFANDAPLALIAGPCQLESREHAFEMAGRLKEMAEKLGLGFVYKTSFDKANRTSLLGKRGAGLDAALPIFADLRRELGVPVLTDVHTEGQCEILADAVDVLQIPAFLCRQTDLLVAAAKTGKVVNVKKGQFLAPWDMKNVVAKITASGNPNVLTTERGVSFGYNTLVTDMRALPIMAEIGAPVIFDATHSVQQPGGQGSSSGGDRRFVETLARAAVAVGVAGVFIETHQDPDNAPSDGPNMVQLDKMPALLERLMAFDRIAKSK.

The protein belongs to the KdsA family.

The protein localises to the cytoplasm. It catalyses the reaction D-arabinose 5-phosphate + phosphoenolpyruvate + H2O = 3-deoxy-alpha-D-manno-2-octulosonate-8-phosphate + phosphate. The protein operates within carbohydrate biosynthesis; 3-deoxy-D-manno-octulosonate biosynthesis; 3-deoxy-D-manno-octulosonate from D-ribulose 5-phosphate: step 2/3. It participates in bacterial outer membrane biogenesis; lipopolysaccharide biosynthesis. The polypeptide is 2-dehydro-3-deoxyphosphooctonate aldolase (Chelativorans sp. (strain BNC1)).